The chain runs to 205 residues: HTH-type transcriptional repressor KstR2 (205 aa).

Residues 10-70 (ASRRDELLQL…EVLRDFLDWL (61 aa)) enclose the HTH tetR-type domain. The segment at residues 33–52 (TVRDIADSAGILSGSLYHHF) is a DNA-binding region (H-T-H motif).

In terms of assembly, homodimer.

Its function is as follows. Controls the expression of a small regulon that may play a role in the utilization of cholesterol. In Mycolicibacterium smegmatis (strain ATCC 700084 / mc(2)155) (Mycobacterium smegmatis), this protein is HTH-type transcriptional repressor KstR2 (kstR2).